A 95-amino-acid polypeptide reads, in one-letter code: 6 kDa early secretory antigenic target (95 aa).

2 helical membrane passes run 11-43 (IEAA…AAAW) and 49-85 (EAYQ…AMAS). A coiled-coil region spans residues 56-87 (QKWDATATELNNALQNLARTISEAGQAMASTE).

It belongs to the WXG100 family. ESAT-6 subfamily. In terms of assembly, forms a tight 1:1 complex with EsxB (CFP-10).

The protein localises to the secreted. The protein resides in the host membrane. Functionally, a secreted protein. Acts as a strong host T-cell antigen. Plays a number of roles in modulating the host's immune response to infection as well as being responsible for bacterial escape into the host cytoplasm. The protein is 6 kDa early secretory antigenic target (esxA) of Mycobacterium bovis (strain ATCC BAA-935 / AF2122/97).